A 245-amino-acid polypeptide reads, in one-letter code: Tetrahydromethanopterin S-methyltransferase subunit A 1 (245 aa).

At 1–222 (MADKKPAADN…AGNYSGKVQG (222 aa)) the chain is on the cytoplasmic side. Residue His84 participates in 5-hydroxybenzimidazolylcob(I)amide binding. Residues 223 to 243 (IMIGLIFTLVIGFLLLMAPLL) form a helical membrane-spanning segment. The Extracellular segment spans residues 244 to 245 (GA).

It belongs to the MtrA family. In terms of assembly, the complex is composed of 8 subunits; MtrA, MtrB, MtrC, MtrD, MtrE, MtrF, MtrG and MtrH. 5-hydroxybenzimidazolylcob(I)amide serves as cofactor.

The protein localises to the cell membrane. The enzyme catalyses 5-methyl-5,6,7,8-tetrahydromethanopterin + coenzyme M + 2 Na(+)(in) = 5,6,7,8-tetrahydromethanopterin + methyl-coenzyme M + 2 Na(+)(out). Its pathway is one-carbon metabolism; methanogenesis from CO(2); methyl-coenzyme M from 5,10-methylene-5,6,7,8-tetrahydromethanopterin: step 2/2. In terms of biological role, part of a complex that catalyzes the formation of methyl-coenzyme M and tetrahydromethanopterin from coenzyme M and methyl-tetrahydromethanopterin. This is an energy-conserving, sodium-ion translocating step. The protein is Tetrahydromethanopterin S-methyltransferase subunit A 1 of Methanobrevibacter ruminantium (strain ATCC 35063 / DSM 1093 / JCM 13430 / OCM 146 / M1) (Methanobacterium ruminantium).